The primary structure comprises 1116 residues: Angiopoietin-1 receptor (1116 aa).

Residues 1–21 (MCLLDSCTALLLLGCWMSGSA) form the signal peptide. Topologically, residues 22–745 (VRISDVTLVN…FAAHGHLLLY (724 aa)) are extracellular. Residues Cys46 and Cys106 are joined by a disulfide bond. One can recognise an Ig-like C2-type 1 domain in the interval 46–126 (CVSSDWSSGG…YTYKMLQEAA (81 aa)). N-linked (GlcNAc...) asparagine glycans are attached at residues Asn110, Asn143, and Asn223. 3 consecutive EGF-like domains span residues 214–256 (SCRA…HTCD), 258–302 (VCGE…LSCN), and 304–342 (ACPD…SRCE). Intrachain disulfides connect Cys215–Cys224, Cys228–Cys237, Cys231–Cys244, Cys246–Cys255, Cys259–Cys268, Cys272–Cys277, Cys283–Cys290, Cys292–Cys301, Cys305–Cys314, Cys318–Cys325, Cys320–Cys331, and Cys333–Cys341. An Ig-like C2-type 2 domain is found at 348-438 (PVISHLRDVE…MQVEDEFTVE (91 aa)). N-linked (GlcNAc...) asparagine glycans are attached at residues Asn367, Asn387, and Asn425. A disulfide bridge links Cys368 with Cys422. Fibronectin type-III domains follow at residues 444–538 (RPQN…TQVL), 540–633 (LPVG…QLPP), and 634–729 (PPAN…TLPQ). Asn590, Asn637, and Asn642 each carry an N-linked (GlcNAc...) asparagine glycan. A helical membrane pass occupies residues 746-766 (AILGSAGMTCCTVLLAFCIVL). At 767-1116 (QLKRNTLQRR…GIDCSAEEAG (350 aa)) the chain is on the cytoplasmic side. One can recognise a Protein kinase domain in the interval 816–1095 (IQFQDVLGEG…RMLEERKTYV (280 aa)). Residues 822–830 (LGEGNFGQV) and Lys847 contribute to the ATP site. Tyr852 carries the post-translational modification Phosphotyrosine; by autocatalysis. Residue Asp956 is the Proton acceptor of the active site. Tyr984, Tyr1094, and Tyr1100 each carry phosphotyrosine; by autocatalysis.

Belongs to the protein kinase superfamily. Tyr protein kinase family. Tie subfamily. Interacts with svep1. Post-translationally, autophosphorylated on tyrosine residues in response to ligand binding. Autophosphorylation occurs in trans, i.e. one subunit of the dimeric receptor phosphorylates tyrosine residues on the other subunit. Autophosphorylation occurs in a sequential manner, where Tyr-984 in the kinase activation loop is phosphorylated first, followed by autophosphorylation at additional tyrosine residues. Phosphorylation is important for interaction with scaffold proteins and effectors.

The protein localises to the cell membrane. It is found in the cell junction. Its subcellular location is the focal adhesion. The protein resides in the cytoplasm. It localises to the cytoskeleton. It carries out the reaction L-tyrosyl-[protein] + ATP = O-phospho-L-tyrosyl-[protein] + ADP + H(+). Its activity is regulated as follows. Angiopoietin binding leads to receptor dimerization and activation by autophosphorylation at Tyr-984 on the kinase activation loop. Functionally, tyrosine-protein kinase that acts as a cell-surface receptor for angiopoietins and regulates angiogenesis, endothelial cell survival, proliferation, migration, adhesion and cell spreading, reorganization of the actin cytoskeleton, but also maintenance of vascular quiescence. Can activate or inhibit angiogenesis, depending on the context. Angiopoietin signaling triggers receptor dimerization and autophosphorylation at specific tyrosine residues that then serve as binding sites for scaffold proteins and effectors. In Danio rerio (Zebrafish), this protein is Angiopoietin-1 receptor.